The sequence spans 424 residues: CinA-like protein (424 aa).

This sequence belongs to the CinA family.

This is CinA-like protein from Shewanella loihica (strain ATCC BAA-1088 / PV-4).